The following is a 433-amino-acid chain: CinA-like protein (433 aa).

The protein belongs to the CinA family.

This is CinA-like protein from Prochlorococcus marinus (strain MIT 9515).